We begin with the raw amino-acid sequence, 515 residues long: ATP-dependent rRNA helicase rrp-3 (515 aa).

The disordered stretch occupies residues 1–85 (MSTKRRKTSD…LDVAPEQEEV (85 aa)). Over residues 15–24 (LKKAAAPSAP) the composition is skewed to low complexity. Over residues 25 to 55 (ELKKEKKVKDKSTKDKSSTKKTEKTEKKQDA) the composition is skewed to basic and acidic residues. Residues 69 to 85 (TEEDSVTLDVAPEQEEV) are compositionally biased toward acidic residues. The Q motif signature appears at 90 to 118 (KTFKDLGIVDALCEACERLGYKNPTPIQE). One can recognise a Helicase ATP-binding domain in the interval 121–292 (IPLALQNRDI…RASLRDPLKV (172 aa)). Position 134–141 (134–141 (AETGSGKT)) interacts with ATP. A DEAD box motif is present at residues 240 to 243 (DEAD). In terms of domain architecture, Helicase C-terminal spans 316–464 (HKDTYLVYLC…EYPLEKDEVM (149 aa)). The segment at 482-515 (KSLMENQGKHGGLLKRKRGNGQGGGRDHMDAEEG) is disordered. The segment covering 506–515 (GRDHMDAEEG) has biased composition (basic and acidic residues).

It belongs to the DEAD box helicase family. DDX47/RRP3 subfamily.

Its subcellular location is the nucleus. Its function is as follows. Required for pre-ribosomal RNA processing. Involved in the maturation of the 35S-pre-rRNA and to its cleavage to mature 18S rRNA. The chain is ATP-dependent rRNA helicase rrp-3 (rrp-3) from Neurospora crassa (strain ATCC 24698 / 74-OR23-1A / CBS 708.71 / DSM 1257 / FGSC 987).